We begin with the raw amino-acid sequence, 590 residues long: Muscarinic acetylcholine receptor M3 (590 aa).

The Extracellular segment spans residues 1–67 (MTLHNNSTTS…DPLGGHTVWQ (67 aa)). N-linked (GlcNAc...) asparagine glycans are attached at residues N5, N6, N15, N41, and N48. A helical membrane pass occupies residues 68–91 (VVFIAFLTGILALVTIIGNILVIV). The Cytoplasmic portion of the chain corresponds to 92–104 (SFKVNKQLKTVNN). The helical transmembrane segment at 105-130 (YFLLSLACADLIIGVISMNLFTTYII) threads the bilayer. The Extracellular segment spans residues 131–142 (MNRWALGNLACD). The cysteines at positions 141 and 221 are disulfide-linked. A helical transmembrane segment spans residues 143-164 (LWLAIDYVASNASVMNLLVISF). The Cytoplasmic segment spans residues 165–184 (DRYFSITRPLTYRAKRTTKR). Residues 185–206 (AGVMIGLAWVISFVLWAPAILF) traverse the membrane as a helical segment. The Extracellular segment spans residues 207-229 (WQYFVGKRTVPPGECFIQFLSEP). Residues 230–252 (TITFGTAIAAFYMPVTIMTILYW) form a helical membrane-spanning segment. Residues 253-491 (RIYKETEKRT…SLVKEKKAAQ (239 aa)) lie on the Cytoplasmic side of the membrane. A Basolateral sorting signal motif is present at residues 275–281 (AETENFV). Positions 323–357 (SSEQMDQDHSSSDSWNNNDAAASLENSASSDEEDI) are disordered. The segment covering 334 to 345 (SDSWNNNDAAAS) has biased composition (low complexity). S385 is subject to Phosphoserine. The chain crosses the membrane as a helical span at residues 492 to 514 (TLSAILLAFIITWTPYNIMVLVN). Topologically, residues 515–526 (TFCDSCIPKTFW) are extracellular. C517 and C520 are disulfide-bonded. The helical transmembrane segment at 527-546 (NLGYWLCYINSTVNPVCYAL) threads the bilayer. Topologically, residues 547–590 (CNKTFRTTFKMLLLCQCGKKKRRKQQYQQRQSVIFHKRAPEQAL) are cytoplasmic.

It belongs to the G-protein coupled receptor 1 family. Muscarinic acetylcholine receptor subfamily. CHRM3 sub-subfamily. In terms of assembly, homodimer; the dimers can form tetramers. Interacts with NALCN. Interacts with TMEM147.

The protein localises to the cell membrane. The protein resides in the postsynaptic cell membrane. It is found in the basolateral cell membrane. It localises to the endoplasmic reticulum membrane. The muscarinic acetylcholine receptor mediates various cellular responses, including inhibition of adenylate cyclase, breakdown of phosphoinositides and modulation of potassium channels through the action of G proteins. Primary transducing effect is Pi turnover. The polypeptide is Muscarinic acetylcholine receptor M3 (CHRM3) (Gorilla gorilla gorilla (Western lowland gorilla)).